A 347-amino-acid chain; its full sequence is N-acetyl-gamma-glutamyl-phosphate reductase (347 aa).

Cys152 is a catalytic residue.

Belongs to the NAGSA dehydrogenase family. Type 1 subfamily.

It localises to the cytoplasm. The catalysed reaction is N-acetyl-L-glutamate 5-semialdehyde + phosphate + NADP(+) = N-acetyl-L-glutamyl 5-phosphate + NADPH + H(+). The protein operates within amino-acid biosynthesis; L-arginine biosynthesis; N(2)-acetyl-L-ornithine from L-glutamate: step 3/4. Functionally, catalyzes the NADPH-dependent reduction of N-acetyl-5-glutamyl phosphate to yield N-acetyl-L-glutamate 5-semialdehyde. This is N-acetyl-gamma-glutamyl-phosphate reductase from Neisseria meningitidis serogroup A / serotype 4A (strain DSM 15465 / Z2491).